We begin with the raw amino-acid sequence, 417 residues long: Acetate kinase (417 aa).

N7 contributes to the Mg(2+) binding site. K14 provides a ligand contact to ATP. R104 is a substrate binding site. D162 serves as the catalytic Proton donor/acceptor. ATP-binding positions include 222 to 226, 297 to 299, and 346 to 350; these read HLGNG, DMR, and GIGEN. E401 serves as a coordination point for Mg(2+).

It belongs to the acetokinase family. As to quaternary structure, homodimer. It depends on Mg(2+) as a cofactor. Mn(2+) serves as cofactor.

It is found in the cytoplasm. It carries out the reaction acetate + ATP = acetyl phosphate + ADP. The protein operates within metabolic intermediate biosynthesis; acetyl-CoA biosynthesis; acetyl-CoA from acetate: step 1/2. In terms of biological role, catalyzes the formation of acetyl phosphate from acetate and ATP. Can also catalyze the reverse reaction. This Chloroherpeton thalassium (strain ATCC 35110 / GB-78) protein is Acetate kinase.